We begin with the raw amino-acid sequence, 414 residues long: Ribulose bisphosphate carboxylase/oxygenase activase (414 aa).

Position 37–44 (37–44 (GRKGEGKT)) interacts with ATP. Residues 296–326 (RGYQTAPPPEAPVIQPVNNSSHKQKTSNTHL) are disordered. Residues 311 to 326 (PVNNSSHKQKTSNTHL) show a composition bias toward polar residues.

It belongs to the RuBisCO activase family.

Functionally, activation of RuBisCO (ribulose-1,5-bisohosphate carboxylase/oxygenase; EC 4.1.1.39) involves the ATP-dependent carboxylation of the epsilon-amino group of lysine leading to a carbamate structure. The polypeptide is Ribulose bisphosphate carboxylase/oxygenase activase (rca) (Nostoc sp. (strain PCC 7120 / SAG 25.82 / UTEX 2576)).